We begin with the raw amino-acid sequence, 149 residues long: Pleckstrin homology domain-containing family J member 1 (149 aa).

Residues 15–108 enclose the PH domain; the sequence is PAEMAAELGM…WMEALRRASY (94 aa).

Expressed in testis and liver.

The polypeptide is Pleckstrin homology domain-containing family J member 1 (PLEKHJ1) (Homo sapiens (Human)).